The following is a 199-amino-acid chain: MENFRKVRSEEAPAGCGAEGGGPGSGPFADLAPGAVHMRVKEGSKIRNLMAFATASMAQPATRAIVFSGCGRATTKTVTCAEILKRRLAGLHQVTRLRYRSVREVWQSLPPGPTQGQTPGEPAASLSVLKNVPGLAILLSKDALDPRQPGYQPPNPHPGPSSPPAAPASKRSLGEPAAGEGSAKRSQPEPGVADEDQTA.

Over residues 1–11 the composition is skewed to basic and acidic residues; sequence MENFRKVRSEE. 2 disordered regions span residues 1–28 and 144–199; these read MENF…SGPF and LDPR…DQTA. The segment covering 151 to 166 has biased composition (pro residues); that stretch reads YQPPNPHPGPSSPPAA. Phosphoserine is present on residues Ser-172 and Ser-182.

It belongs to the histone-like Alba family. As to quaternary structure, component of nuclear RNase P and RNase MRP ribonucleoproteins. RNase P consists of a catalytic RNA moiety and 10 different protein chains; POP1, POP4, POP5, POP7, RPP14, RPP21, RPP25, RPP30, RPP38 and RPP40. Within the RNase P complex, POP1, POP7 and RPP25 form the 'finger' subcomplex, POP5, RPP14, RPP40 and homodimeric RPP30 form the 'palm' subcomplex, and RPP21, POP4 and RPP38 form the 'wrist' subcomplex. All subunits of the RNase P complex interact with the catalytic RNA. Several subunits of RNase P are also part of the RNase MRP complex. RNase MRP consists of a catalytic RNA moiety and about 8 protein subunits; POP1, POP7, RPP25, RPP30, RPP38, RPP40 and possibly also POP4 and POP5. POP7 forms a heterodimer with RPP25 that binds to the P3 stem loop of the catalytic RNA.

The protein resides in the nucleus. It localises to the nucleolus. Its function is as follows. Component of ribonuclease P, a ribonucleoprotein complex that generates mature tRNA molecules by cleaving their 5'-ends. Also a component of the MRP ribonuclease complex, which cleaves pre-rRNA sequences. This Homo sapiens (Human) protein is Ribonuclease P protein subunit p25 (RPP25).